The primary structure comprises 174 residues: Adenylate kinase (174 aa).

The segment at 12–41 is NMP; the sequence is STGDMLRAAIKAGTPLGLEAKKIIDEGGLV. Residues Thr-13, Arg-18, 39–41, 67–70, and Gln-74 contribute to the AMP site; these read GLV and GFPR. Residues 104-141 are LID; sequence GRRVHLASGRTYHIAYNPPKVEGKDDVTGEDLIQRDDD. ATP contacts are provided by residues Arg-105 and 114 to 115; that span reads TY. Residues Arg-138 and Arg-149 each contribute to the AMP site.

This sequence belongs to the adenylate kinase family. Monomer.

The protein resides in the cytoplasm. The catalysed reaction is AMP + ATP = 2 ADP. It functions in the pathway purine metabolism; AMP biosynthesis via salvage pathway; AMP from ADP: step 1/1. Catalyzes the reversible transfer of the terminal phosphate group between ATP and AMP. Plays an important role in cellular energy homeostasis and in adenine nucleotide metabolism. The chain is Adenylate kinase from Neisseria animalis.